We begin with the raw amino-acid sequence, 204 residues long: Guanylate kinase (204 aa).

The Guanylate kinase-like domain occupies 3 to 181; it reads GTLYIVSASS…AVSEMSAIFT (179 aa). 10 to 17 contributes to the ATP binding site; the sequence is ASSGTGKS.

Belongs to the guanylate kinase family.

The protein localises to the cytoplasm. It carries out the reaction GMP + ATP = GDP + ADP. Its function is as follows. Essential for recycling GMP and indirectly, cGMP. The chain is Guanylate kinase from Xylella fastidiosa (strain Temecula1 / ATCC 700964).